The primary structure comprises 103 residues: Putative membrane protein insertion efficiency factor (103 aa).

This sequence belongs to the UPF0161 family.

It localises to the cell membrane. Its function is as follows. Could be involved in insertion of integral membrane proteins into the membrane. This is Putative membrane protein insertion efficiency factor from Clavibacter michiganensis subsp. michiganensis (strain NCPPB 382).